We begin with the raw amino-acid sequence, 174 residues long: Adenylate kinase (174 aa).

Residues 12–41 form an NMP region; sequence STGDMLRAAIKAGTPLGLEAKKIIDEGGLV. Residues Thr-13, Arg-18, 39-41, 67-70, and Gln-74 contribute to the AMP site; these read GLV and GFPR. Positions 104–141 are LID; sequence GRRVHLASGRTYHIAYNPPKVEGKDDVTGEDLIQRDDD. Residues Arg-105 and 114–115 contribute to the ATP site; that span reads TY. AMP contacts are provided by Arg-138 and Arg-149.

The protein belongs to the adenylate kinase family. Monomer.

Its subcellular location is the cytoplasm. The catalysed reaction is AMP + ATP = 2 ADP. The protein operates within purine metabolism; AMP biosynthesis via salvage pathway; AMP from ADP: step 1/1. In terms of biological role, catalyzes the reversible transfer of the terminal phosphate group between ATP and AMP. Plays an important role in cellular energy homeostasis and in adenine nucleotide metabolism. The polypeptide is Adenylate kinase (Neisseria animalis).